The sequence spans 239 residues: 7-cyano-7-deazaguanine synthase (239 aa).

8 to 18 (FSGGLDSTACL) lines the ATP pocket. The Zn(2+) site is built by Cys194, Cys209, Cys212, and Cys215.

It belongs to the QueC family. Zn(2+) serves as cofactor.

The catalysed reaction is 7-carboxy-7-deazaguanine + NH4(+) + ATP = 7-cyano-7-deazaguanine + ADP + phosphate + H2O + H(+). The protein operates within purine metabolism; 7-cyano-7-deazaguanine biosynthesis. Functionally, catalyzes the ATP-dependent conversion of 7-carboxy-7-deazaguanine (CDG) to 7-cyano-7-deazaguanine (preQ(0)). This chain is 7-cyano-7-deazaguanine synthase, found in Pyrococcus horikoshii (strain ATCC 700860 / DSM 12428 / JCM 9974 / NBRC 100139 / OT-3).